The sequence spans 321 residues: tRNA(Ile)-lysidine synthase (321 aa).

21-26 is an ATP binding site; that stretch reads SYGSDS.

It belongs to the tRNA(Ile)-lysidine synthase family.

The protein localises to the cytoplasm. It carries out the reaction cytidine(34) in tRNA(Ile2) + L-lysine + ATP = lysidine(34) in tRNA(Ile2) + AMP + diphosphate + H(+). Its function is as follows. Ligates lysine onto the cytidine present at position 34 of the AUA codon-specific tRNA(Ile) that contains the anticodon CAU, in an ATP-dependent manner. Cytidine is converted to lysidine, thus changing the amino acid specificity of the tRNA from methionine to isoleucine. The polypeptide is tRNA(Ile)-lysidine synthase (Campylobacter jejuni (strain RM1221)).